A 339-amino-acid polypeptide reads, in one-letter code: MKTYILTSPKNIPYFNAALEEWLLTEFKKGEEIKVIYFWQNANTIVVGRNQNTYAEVNLSEVEKDKVNLFRRFSGGGAVFHDMGNICFSIILPKAKKEMENAYEETTRNVVKFLNSVGVPAQFHGRNDLEIEGKKFSGLAEYLSKDRVLVHGTLLFDTDFTKLAKYLNVDKTKMVSKGIESVQKRVVNVKEYLPNLSTPTFLEKMVQFFTETEHAETIHLDESSIKMVEKRAQEHFQSWDWNFGKTADYNFKNKKRFEGAGIFECNVQVDQGKVVDIKFYGDFLSVIDITPVTQQLVGQKYDYQTFAKILGNIDNFKEYFGTLTPQQMLEVIFDNKKDE.

Positions 30 to 217 (GEEIKVIYFW…FFTETEHAET (188 aa)) constitute a BPL/LPL catalytic domain. ATP contacts are provided by residues Arg72, 77–80 (GAVF), and Lys135. Lys135 is a (R)-lipoate binding site.

The protein belongs to the LplA family.

It localises to the cytoplasm. The enzyme catalyses L-lysyl-[lipoyl-carrier protein] + (R)-lipoate + ATP = N(6)-[(R)-lipoyl]-L-lysyl-[lipoyl-carrier protein] + AMP + diphosphate + H(+). It functions in the pathway protein modification; protein lipoylation via exogenous pathway; protein N(6)-(lipoyl)lysine from lipoate: step 1/2. The protein operates within protein modification; protein lipoylation via exogenous pathway; protein N(6)-(lipoyl)lysine from lipoate: step 2/2. In terms of biological role, catalyzes both the ATP-dependent activation of exogenously supplied lipoate to lipoyl-AMP and the transfer of the activated lipoyl onto the lipoyl domains of lipoate-dependent enzymes. The polypeptide is Probable lipoate-protein ligase A (lplA) (Mycoplasma pneumoniae (strain ATCC 29342 / M129 / Subtype 1) (Mycoplasmoides pneumoniae)).